The following is a 323-amino-acid chain: NADH-ubiquinone oxidoreductase chain 1 (323 aa).

The next 9 helical transmembrane spans lie at 10–30, 52–72, 84–104, 119–139, 157–177, 189–209, 245–265, 268–288, and 302–322; these read LLYI…GLLI, PNVV…KLVL, IIYA…WSVI, VIFI…AGWA, VSYE…AGTV, VWFI…ALAE, YANI…GIVS, ISGA…RATL, and KSLL…VLII.

Belongs to the complex I subunit 1 family.

Its subcellular location is the mitochondrion inner membrane. It catalyses the reaction a ubiquinone + NADH + 5 H(+)(in) = a ubiquinol + NAD(+) + 4 H(+)(out). In terms of biological role, core subunit of the mitochondrial membrane respiratory chain NADH dehydrogenase (Complex I) that is believed to belong to the minimal assembly required for catalysis. Complex I functions in the transfer of electrons from NADH to the respiratory chain. The immediate electron acceptor for the enzyme is believed to be ubiquinone. The polypeptide is NADH-ubiquinone oxidoreductase chain 1 (nad1) (Dictyostelium citrinum (Slime mold)).